A 443-amino-acid polypeptide reads, in one-letter code: Serine/threonine-protein phosphatase 2A 55 kDa regulatory subunit B beta isoform (443 aa).

WD repeat units lie at residues 22–61, 87–128, 171–209, and 220–260; these read TEAD…KNQV, EIEE…KRPE, AHTY…QSFN, and ELTE…LCDR. The residue at position 275 (Ser275) is a Phosphoserine. 3 WD repeats span residues 279 to 317, 334 to 375, and 410 to 442; these read EIIS…RPVE, ENDC…DVTL, and DFSK…QDKV. Phosphotyrosine is present on Tyr295. Thr298 is modified (phosphothreonine).

It belongs to the phosphatase 2A regulatory subunit B family. PP2A consists of a common heterodimeric core enzyme, composed of a 36 kDa catalytic subunit (subunit C) and a 65 kDa constant regulatory subunit (PR65 or subunit A), that associates with a variety of regulatory subunits. Proteins that associate with the core dimer include three families of regulatory subunits B (the R2/B/PR55/B55, R3/B''/PR72/PR130/PR59 and R5/B'/B56 families), the 48 kDa variable regulatory subunit, viral proteins, and cell signaling molecules. Interacts with IER5 (via N- and C-terminal regions). Interacts with TOMM22. Expressed in the brain. Isoform 1 and isoform 2 are expressed in the forbrain. Isoform 1 is more strongly expressed than isoform 2 in the olfactory bulb. Isoform 1 and isoform 2 are weakly expressed in the cerebellum. Isoform 1 is expressed in the testis. Isoform 2 expression is undetectable at birth rising to adult level at day 14.

It localises to the cytoplasm. Its subcellular location is the cytoskeleton. It is found in the membrane. The protein localises to the mitochondrion. The protein resides in the mitochondrion outer membrane. The B regulatory subunit might modulate substrate selectivity and catalytic activity, and might also direct the localization of the catalytic enzyme to a particular subcellular compartment. Within the PP2A holoenzyme complex, isoform 2 is required to promote proapoptotic activity. Isoform 2 regulates neuronal survival through the mitochondrial fission and fusion balance. This chain is Serine/threonine-protein phosphatase 2A 55 kDa regulatory subunit B beta isoform (Ppp2r2b), found in Rattus norvegicus (Rat).